The chain runs to 458 residues: Probable plasmid replicative DNA helicase (458 aa).

The 265-residue stretch at Lys-194–Trp-458 folds into the SF4 helicase domain. Ala-225 to Thr-232 provides a ligand contact to ATP.

The protein belongs to the helicase family. DnaB subfamily. As to quaternary structure, homohexamer.

It catalyses the reaction Couples ATP hydrolysis with the unwinding of duplex DNA at the replication fork by translocating in the 5'-3' direction. This creates two antiparallel DNA single strands (ssDNA). The leading ssDNA polymer is the template for DNA polymerase III holoenzyme which synthesizes a continuous strand.. The enzyme catalyses ATP + H2O = ADP + phosphate + H(+). In terms of biological role, a replicative DNA helicase, it participates in initiation and elongation during DNA replication. Travels ahead of the DNA replisome, separating dsDNA into templates for DNA synthesis. A processive ATP-dependent 5'-3' DNA helicase it has DNA-dependent ATPase activity. The sequence is that of Probable plasmid replicative DNA helicase from Chlamydia psittaci (Chlamydophila psittaci).